The chain runs to 102 residues: Small ribosomal subunit protein uS10 (102 aa).

This sequence belongs to the universal ribosomal protein uS10 family. As to quaternary structure, part of the 30S ribosomal subunit.

Involved in the binding of tRNA to the ribosomes. This chain is Small ribosomal subunit protein uS10, found in Bifidobacterium longum subsp. infantis (strain ATCC 15697 / DSM 20088 / JCM 1222 / NCTC 11817 / S12).